We begin with the raw amino-acid sequence, 154 residues long: MAGPVKDREAFQRLNFLYQAAHCVLAQDPENQALARFYCYTERTIAKRLVLRRDPSVKRTLCRGCSSLLVPGLTCTQRQRRCRGQRWTVQTCLTCQRSQRFLNDPGHLLWGDRPEAQLGSQADSKPLQPLPNTAHSISDRLPEEKMQTQGSSNQ.

Ala-2 carries the N-acetylalanine modification. The Zn(2+) site is built by Cys-62, Cys-65, Cys-92, and Cys-95. The disordered stretch occupies residues Gln-117 to Gln-154. Residues Ile-137–Met-146 are compositionally biased toward basic and acidic residues.

The protein belongs to the eukaryotic/archaeal RNase P protein component 4 family. As to quaternary structure, RNase P consists of a catalytic RNA moiety and about 10 protein subunits; POP1, POP4, POP5, POP7, RPP14, RPP21, RPP25, RPP30, RPP38 and RPP40. Within the RNase P complex, POP1, POP7 and RPP25 form the 'finger' subcomplex, POP5, RPP14, RPP40 and homodimeric RPP30 form the 'palm' subcomplex, and RPP21, POP4 and RPP38 form the 'wrist' subcomplex. All subunits of the RNase P complex interact with the catalytic RNA.

Its subcellular location is the nucleus. It is found in the nucleolus. In terms of biological role, component of ribonuclease P, a ribonucleoprotein complex that generates mature tRNA molecules by cleaving their 5'-ends. The chain is Ribonuclease P protein subunit p21 (RPP21) from Homo sapiens (Human).